Here is a 363-residue protein sequence, read N- to C-terminus: 24-methylenesterol C-methyltransferase 2 (363 aa).

Residues 6–26 (MAWTAAGVGMALVYWFVWVMG) form a helical membrane-spanning segment.

This sequence belongs to the class I-like SAM-binding methyltransferase superfamily. Erg6/SMT family.

Its subcellular location is the membrane. It catalyses the reaction 24-methylidenelophenol + S-adenosyl-L-methionine = (Z)-24-ethylidenelophenol + S-adenosyl-L-homocysteine + H(+). The protein operates within steroid biosynthesis; sterol biosynthesis. Functionally, catalyzes the methyl transfer from S-adenosyl-methionine to the methylene group of 24-methylene lophenol to form 24-ethylidene lophenol. This chain is 24-methylenesterol C-methyltransferase 2 (Smt2-1), found in Oryza sativa subsp. japonica (Rice).